The primary structure comprises 185 residues: Homeobox expressed in ES cells 1 (185 aa).

The segment at 32–69 (KKDCTTSVRPHRPWTDTCGDSEKGGNPPLHAPDLPSET) is disordered. The homeobox DNA-binding region spans 108 to 167 (GRRPRTAFTQNQVEVLENVFRVNCYPGIDIREDLAQKLNLEEDRIQIWFQNRRAKMKRSR).

It belongs to the ANF homeobox family. Can form heterodimers with PROP1 in binding to DNA Interacts with TLE1. In terms of tissue distribution, high levels found in the embryonic liver, lower level expression seen in the viscera, amnion and yolk sac.

Its subcellular location is the nucleus. Required for the normal development of the forebrain, eyes and other anterior structures such as the olfactory placodes and pituitary gland. Possible transcriptional repressor. Binds to the palindromic PIII sequence, 5'-AGCTTGAGTCTAATTGAATTAACTGTAC-3'. HESX1 and PROP1 bind as heterodimers on this palindromic site, and, in vitro, HESX1 can antagonize PROP1 activation. This is Homeobox expressed in ES cells 1 (Hesx1) from Mus musculus (Mouse).